The sequence spans 444 residues: Signal recognition particle 54 kDa protein (444 aa).

Residues Gly106–Thr113, Asp187–Arg191, and Ser245–Asp248 contribute to the GTP site.

This sequence belongs to the GTP-binding SRP family. SRP54 subfamily. Part of the signal recognition particle protein translocation system, which is composed of SRP and FtsY. Archaeal SRP consists of a 7S RNA molecule of 300 nucleotides and two protein subunits: SRP54 and SRP19.

It is found in the cytoplasm. The catalysed reaction is GTP + H2O = GDP + phosphate + H(+). Involved in targeting and insertion of nascent membrane proteins into the cytoplasmic membrane. Binds to the hydrophobic signal sequence of the ribosome-nascent chain (RNC) as it emerges from the ribosomes. The SRP-RNC complex is then targeted to the cytoplasmic membrane where it interacts with the SRP receptor FtsY. The sequence is that of Signal recognition particle 54 kDa protein from Methanosphaera stadtmanae (strain ATCC 43021 / DSM 3091 / JCM 11832 / MCB-3).